We begin with the raw amino-acid sequence, 326 residues long: Protein BCCIP homolog (326 aa).

The disordered stretch occupies residues 37-81 (SHPEDCQCSDEDISFDEKQKIPNLPRKGKEEQVSDSSDEEDSQED). Ser45 carries the phosphoserine modification. The span at 72–81 (SSDEEDSQED) shows a compositional bias: acidic residues.

The protein belongs to the BCP1 family.

The sequence is that of Protein BCCIP homolog from Arabidopsis thaliana (Mouse-ear cress).